Consider the following 426-residue polypeptide: Serine--tRNA ligase (426 aa).

232–234 (TAE) contributes to the L-serine binding site. 263–265 (RRE) is a binding site for ATP. E286 provides a ligand contact to L-serine. 350-353 (EISS) is a binding site for ATP. S385 serves as a coordination point for L-serine.

The protein belongs to the class-II aminoacyl-tRNA synthetase family. Type-1 seryl-tRNA synthetase subfamily. As to quaternary structure, homodimer. The tRNA molecule binds across the dimer.

Its subcellular location is the cytoplasm. The catalysed reaction is tRNA(Ser) + L-serine + ATP = L-seryl-tRNA(Ser) + AMP + diphosphate + H(+). The enzyme catalyses tRNA(Sec) + L-serine + ATP = L-seryl-tRNA(Sec) + AMP + diphosphate + H(+). The protein operates within aminoacyl-tRNA biosynthesis; selenocysteinyl-tRNA(Sec) biosynthesis; L-seryl-tRNA(Sec) from L-serine and tRNA(Sec): step 1/1. Its function is as follows. Catalyzes the attachment of serine to tRNA(Ser). Is also able to aminoacylate tRNA(Sec) with serine, to form the misacylated tRNA L-seryl-tRNA(Sec), which will be further converted into selenocysteinyl-tRNA(Sec). This Fervidobacterium nodosum (strain ATCC 35602 / DSM 5306 / Rt17-B1) protein is Serine--tRNA ligase.